A 111-amino-acid polypeptide reads, in one-letter code: Large ribosomal subunit protein uL24 (111 aa).

The protein belongs to the universal ribosomal protein uL24 family. As to quaternary structure, part of the 50S ribosomal subunit.

In terms of biological role, one of two assembly initiator proteins, it binds directly to the 5'-end of the 23S rRNA, where it nucleates assembly of the 50S subunit. Its function is as follows. One of the proteins that surrounds the polypeptide exit tunnel on the outside of the subunit. The chain is Large ribosomal subunit protein uL24 from Streptococcus pneumoniae (strain Hungary19A-6).